We begin with the raw amino-acid sequence, 325 residues long: Leucine-rich repeat protein FLOR 1 (325 aa).

LRR repeat units follow at residues asparagine 65–aspartate 88, leucine 89–leucine 114, lysine 115–serine 140, threonine 142–methionine 162, proline 163–serine 185, valine 187–tyrosine 211, phenylalanine 213–arginine 233, asparagine 234–phenylalanine 256, alanine 257–lysine 280, and leucine 281–threonine 305.

The protein belongs to the polygalacturonase-inhibiting protein family. In terms of assembly, interacts with MADS domain transcription factors during flower development. Component of a complex made of FLOR1, VSP1 and AGAMOUS (AG). Binds directly with AG. In terms of tissue distribution, confined to flowers and inflorescences (e.g. inflorescence meristems, floral meristems, stamens and carpels).

The protein resides in the cytoplasm. It is found in the nucleus. The protein localises to the perinuclear region. Its subcellular location is the cell membrane. Its function is as follows. Promotes flowering transition in long days (LD). This Arabidopsis thaliana (Mouse-ear cress) protein is Leucine-rich repeat protein FLOR 1.